Here is a 203-residue protein sequence, read N- to C-terminus: A-type ATP synthase subunit E (203 aa).

The protein belongs to the V-ATPase E subunit family. In terms of assembly, has multiple subunits with at least A(3), B(3), C, D, E, F, H, I and proteolipid K(x).

It localises to the cell membrane. Its function is as follows. Component of the A-type ATP synthase that produces ATP from ADP in the presence of a proton gradient across the membrane. The protein is A-type ATP synthase subunit E of Methanococcus aeolicus (strain ATCC BAA-1280 / DSM 17508 / OCM 812 / Nankai-3).